The chain runs to 520 residues: MENIEKLLMQEKILMLELDLVRAKISLARANGSSQQGDLPLHRETPVKEEAVHSALATFTPSQVKAIPEQTAPGKESTNPLMASILPKDMNPVQTGMRLTVPGDFLRPHQGIPIPRKSELSSTVAPLRAESGIQHPHINYYVVYNGPHAGIYDDWGCTKAATNGVPGVAHKKFATITEARAAADAYTTSQQTDRLNFIPKGEAQLKPKSFAKALTSPPKQKAHWLTLGTKKPSSDPAPKEISFDPEITMDDFLYLYDLVRKFDGEGDDTMFTTDNEKISLFNFRKNANPQMVREAYAAGLIKTIYPSNNLQEIKYLPKKVKDAVKRFRTNCIKNTEKDIFLKIRSTIPVWTIQGLLHKPRQVIEIGVSKKLVPTESKAMESKIQIEDLTELAVKTGEQFIQSLLRLNDKKKIFVNMVEHDTLIYSKNIKETVSEDQRAIETFQQRVISGNLLGFHCPAICHFIVKIVEKEGGTYQCHHCDKGKAIVKDASADSGPKDGPPPTRSIVEKEDVPTTSSKQVD.

Residues 487 to 520 are disordered; sequence KDASADSGPKDGPPPTRSIVEKEDVPTTSSKQVD.

Belongs to the caulimoviridae viroplasmin family.

The protein resides in the host cytoplasm. Its function is as follows. Enhances the ribosomal termination-reinitiation event leading to the translation of major open reading frames on the polycistronic viral RNAs. The chain is Transactivator/viroplasmin protein from Arabidopsis thaliana (Mouse-ear cress).